The primary structure comprises 461 residues: uncharacterized protein (461 aa).

Residues 86-127 (KMKPNKDDDEEEDEDDEDDEDDEEEDNEEEDNEEENEITIAP) are disordered. Acidic residues predominate over residues 92 to 122 (DDDEEEDEDDEDDEDDEEEDNEEEDNEEENE). 2 coiled-coil regions span residues 95 to 123 (EEEDEDDEDDEDDEEEDNEEEDNEEENEI) and 405 to 459 (NKYI…KLKK).

Belongs to the mimivirus L5 family.

This is an uncharacterized protein from Acanthamoeba polyphaga mimivirus (APMV).